The following is a 491-amino-acid chain: Glutamyl-tRNA(Gln) amidotransferase subunit A (491 aa).

Active-site charge relay system residues include Lys-77 and Ser-152. Ser-176 acts as the Acyl-ester intermediate in catalysis.

It belongs to the amidase family. GatA subfamily. In terms of assembly, heterotrimer of A, B and C subunits.

It carries out the reaction L-glutamyl-tRNA(Gln) + L-glutamine + ATP + H2O = L-glutaminyl-tRNA(Gln) + L-glutamate + ADP + phosphate + H(+). Allows the formation of correctly charged Gln-tRNA(Gln) through the transamidation of misacylated Glu-tRNA(Gln) in organisms which lack glutaminyl-tRNA synthetase. The reaction takes place in the presence of glutamine and ATP through an activated gamma-phospho-Glu-tRNA(Gln). The chain is Glutamyl-tRNA(Gln) amidotransferase subunit A from Chlamydia trachomatis serovar A (strain ATCC VR-571B / DSM 19440 / HAR-13).